The sequence spans 584 residues: Gag-Pro polyprotein (584 aa).

Glycine 2 carries N-myristoyl glycine; by host lipidation. The disordered stretch occupies residues 95–116 (EAPPSAPLAEDPQKPPPYPEQA). The short motif at 98 to 101 (PSAP) is the PTAP/PSAP motif element. Residues 109–112 (PPPY) carry the PPXY motif motif. CCHC-type zinc fingers lie at residues 349-366 (QPCFRCGQVGHWSRDCKQ) and 372-389 (GPCPVCQDPTHWKRDCPQ). The Peptidase A2 domain maps to 457-535 (VQALLDTGAD…NQWTILGRDA (79 aa)). Aspartate 462 functions as the For protease activity; shared with dimeric partner in the catalytic mechanism.

In terms of assembly, interacts with human TSG101. This interaction is essential for budding and release of viral particles. In terms of processing, specific enzymatic cleavages by the viral protease yield mature proteins. The polyprotein is cleaved during and after budding, this process is termed maturation. The protease is autoproteolytically processed at its N- and C-termini.

The protein localises to the virion. In terms of biological role, matrix protein p19 targets Gag, Gag-Pro and Gag-Pro-Pol polyproteins to the plasma membrane via a multipartite membrane binding signal, that includes its myristoylated N-terminus. Also mediates nuclear localization of the preintegration complex. Functionally, capsid protein p24 forms the conical core of the virus that encapsulates the genomic RNA-nucleocapsid complex. Its function is as follows. Nucleocapsid protein p15 is involved in the packaging and encapsidation of two copies of the genome. The aspartyl protease mediates proteolytic cleavages of Gag, Gag-Pro and Gag-Pro-Pol polyproteins during or shortly after the release of the virion from the plasma membrane. Cleavages take place as an ordered, step-wise cascade to yield mature proteins. This process is called maturation. Displays maximal activity during the budding process just prior to particle release from the cell. Hydrolyzes host EIF4GI in order to shut off the capped cellular mRNA translation. The resulting inhibition of cellular protein synthesis serves to ensure maximal viral gene expression and to evade host immune response. The chain is Gag-Pro polyprotein (gag-pro) from Homo sapiens (Human).